We begin with the raw amino-acid sequence, 69 residues long: Sec-independent protein translocase protein TatA (69 aa).

A helical transmembrane segment spans residues 1–21; that stretch reads MFGLGGQELVLILLIVLLLFG. Basic and acidic residues predominate over residues 47–63; sequence EEEFNKSMDDNPKKEKA. Residues 47–69 form a disordered region; that stretch reads EEEFNKSMDDNPKKEKATTASKS.

The protein belongs to the TatA/E family. As to quaternary structure, forms a complex with TatC.

It localises to the cell inner membrane. Functionally, part of the twin-arginine translocation (Tat) system that transports large folded proteins containing a characteristic twin-arginine motif in their signal peptide across membranes. TatA could form the protein-conducting channel of the Tat system. This chain is Sec-independent protein translocase protein TatA, found in Chlorobium chlorochromatii (strain CaD3).